The chain runs to 488 residues: 3-octaprenyl-4-hydroxybenzoate carboxy-lyase (488 aa).

A Mn(2+)-binding site is contributed by Asn-172. Residues 175-177, 189-191, and 194-195 each bind prenylated FMN; these read IYR, RWL, and RG. Glu-238 lines the Mn(2+) pocket. Asp-287 acts as the Proton donor in catalysis.

This sequence belongs to the UbiD family. Homohexamer. It depends on prenylated FMN as a cofactor. Requires Mn(2+) as cofactor.

It is found in the cell membrane. It catalyses the reaction a 4-hydroxy-3-(all-trans-polyprenyl)benzoate + H(+) = a 2-(all-trans-polyprenyl)phenol + CO2. It participates in cofactor biosynthesis; ubiquinone biosynthesis. In terms of biological role, catalyzes the decarboxylation of 3-octaprenyl-4-hydroxy benzoate to 2-octaprenylphenol, an intermediate step in ubiquinone biosynthesis. The protein is 3-octaprenyl-4-hydroxybenzoate carboxy-lyase of Pseudomonas putida (strain ATCC 47054 / DSM 6125 / CFBP 8728 / NCIMB 11950 / KT2440).